Reading from the N-terminus, the 225-residue chain is 7-cyano-7-deazaguanine synthase (225 aa).

Residue 9–19 (LSGGLDSATCL) participates in ATP binding. Zn(2+) contacts are provided by Cys-189, Cys-199, Cys-202, and Cys-205.

Belongs to the QueC family. Zn(2+) serves as cofactor.

It carries out the reaction 7-carboxy-7-deazaguanine + NH4(+) + ATP = 7-cyano-7-deazaguanine + ADP + phosphate + H2O + H(+). The protein operates within purine metabolism; 7-cyano-7-deazaguanine biosynthesis. Functionally, catalyzes the ATP-dependent conversion of 7-carboxy-7-deazaguanine (CDG) to 7-cyano-7-deazaguanine (preQ(0)). The polypeptide is 7-cyano-7-deazaguanine synthase (Dechloromonas aromatica (strain RCB)).